The sequence spans 697 residues: Methionine--tRNA ligase (697 aa).

The 'HIGH' region signature appears at 11–21 (PYANGPIHLGH). Positions 142, 145, 155, and 158 each coordinate Zn(2+). The short motif at 343–347 (KMSKS) is the 'KMSKS' region element. Residue K346 coordinates ATP. A tRNA-binding domain is found at 595 to 697 (DFMKVEMTVA…DECKVGDKLA (103 aa)).

The protein belongs to the class-I aminoacyl-tRNA synthetase family. MetG type 1 subfamily. In terms of assembly, homodimer. The cofactor is Zn(2+).

Its subcellular location is the cytoplasm. The catalysed reaction is tRNA(Met) + L-methionine + ATP = L-methionyl-tRNA(Met) + AMP + diphosphate. Is required not only for elongation of protein synthesis but also for the initiation of all mRNA translation through initiator tRNA(fMet) aminoacylation. This is Methionine--tRNA ligase from Psychrobacter sp. (strain PRwf-1).